Here is a 613-residue protein sequence, read N- to C-terminus: Dihydroxy-acid dehydratase (613 aa).

D81 provides a ligand contact to Mg(2+). Residue C122 participates in [2Fe-2S] cluster binding. D123 and K124 together coordinate Mg(2+). K124 is modified (N6-carboxylysine). C195 lines the [2Fe-2S] cluster pocket. Position 491 (E491) interacts with Mg(2+). Catalysis depends on S517, which acts as the Proton acceptor.

Belongs to the IlvD/Edd family. Homodimer. [2Fe-2S] cluster serves as cofactor. It depends on Mg(2+) as a cofactor.

The catalysed reaction is (2R)-2,3-dihydroxy-3-methylbutanoate = 3-methyl-2-oxobutanoate + H2O. It carries out the reaction (2R,3R)-2,3-dihydroxy-3-methylpentanoate = (S)-3-methyl-2-oxopentanoate + H2O. Its pathway is amino-acid biosynthesis; L-isoleucine biosynthesis; L-isoleucine from 2-oxobutanoate: step 3/4. The protein operates within amino-acid biosynthesis; L-valine biosynthesis; L-valine from pyruvate: step 3/4. Functions in the biosynthesis of branched-chain amino acids. Catalyzes the dehydration of (2R,3R)-2,3-dihydroxy-3-methylpentanoate (2,3-dihydroxy-3-methylvalerate) into 2-oxo-3-methylpentanoate (2-oxo-3-methylvalerate) and of (2R)-2,3-dihydroxy-3-methylbutanoate (2,3-dihydroxyisovalerate) into 2-oxo-3-methylbutanoate (2-oxoisovalerate), the penultimate precursor to L-isoleucine and L-valine, respectively. This Aeromonas salmonicida (strain A449) protein is Dihydroxy-acid dehydratase.